The primary structure comprises 310 residues: Fe-S cluster assembly protein dre2 (310 aa).

Positions Met1–Val130 are N-terminal SAM-like domain. The interval Pro131–Ala203 is linker. 4 residues coordinate [2Fe-2S] cluster: Cys212, Cys223, Cys226, and Cys228. The tract at residues Cys212–Cys228 is fe-S binding site A. [4Fe-4S] cluster is bound by residues Cys273, Cys276, Cys284, and Cys287. 2 short sequence motifs (cx2C motif) span residues Cys273 to Cys276 and Cys284 to Cys287. Positions Cys273 to Cys287 are fe-S binding site B.

The protein belongs to the anamorsin family. As to quaternary structure, monomer. Interacts with tah18. Interacts with mia40. [2Fe-2S] cluster serves as cofactor. [4Fe-4S] cluster is required as a cofactor.

Its subcellular location is the cytoplasm. It is found in the mitochondrion intermembrane space. In terms of biological role, component of the cytosolic iron-sulfur (Fe-S) protein assembly (CIA) machinery required for the maturation of extramitochondrial Fe-S proteins. Part of an electron transfer chain functioning in an early step of cytosolic Fe-S biogenesis, facilitating the de novo assembly of a [4Fe-4S] cluster on the scaffold complex cfd1-nbp35. Electrons are transferred to dre2 from NADPH via the FAD- and FMN-containing protein tah18. Tah18-dre2 are also required for the assembly of the diferric tyrosyl radical cofactor of ribonucleotide reductase (RNR), probably by providing electrons for reduction during radical cofactor maturation in the catalytic small subunit rnr2. The protein is Fe-S cluster assembly protein dre2 of Aspergillus clavatus (strain ATCC 1007 / CBS 513.65 / DSM 816 / NCTC 3887 / NRRL 1 / QM 1276 / 107).